A 507-amino-acid polypeptide reads, in one-letter code: FLYWCH transcription factor 1 (507 aa).

The span at 1 to 26 shows a compositional bias: low complexity; it reads MYSPESMNSNISSPSPPSSSSLNAPS. Positions 1–51 are disordered; that stretch reads MYSPESMNSNISSPSPPSSSSLNAPSLADAPEVRSDDGEAETSEPSTSVTA. An FLYWCH-type zinc finger spans residues 135 to 192; sequence KKTRLKVFSNGFFMTFDKLSSCQKKYFWRCEYKNTCKARMHTDIVTEKILTFIHEHNH.

Its function is as follows. Probable transcription factor. Binds to the DNA sequence motif 5'-[AG]GGCGCCG-3' in the promoters of target genes, including micro-RNA genes, in order to repress expression, and acting redundantly with flh-2. In Caenorhabditis elegans, this protein is FLYWCH transcription factor 1.